Consider the following 292-residue polypeptide: Phosphatidylserine decarboxylase proenzyme (292 aa).

Residues Asp-89, His-146, and Ser-252 each act as charge relay system; for autoendoproteolytic cleavage activity in the active site. The active-site Schiff-base intermediate with substrate; via pyruvic acid; for decarboxylase activity is the Ser-252. Ser-252 bears the Pyruvic acid (Ser); by autocatalysis mark.

The protein belongs to the phosphatidylserine decarboxylase family. PSD-B subfamily. Prokaryotic type I sub-subfamily. In terms of assembly, heterodimer of a large membrane-associated beta subunit and a small pyruvoyl-containing alpha subunit. It depends on pyruvate as a cofactor. Is synthesized initially as an inactive proenzyme. Formation of the active enzyme involves a self-maturation process in which the active site pyruvoyl group is generated from an internal serine residue via an autocatalytic post-translational modification. Two non-identical subunits are generated from the proenzyme in this reaction, and the pyruvate is formed at the N-terminus of the alpha chain, which is derived from the carboxyl end of the proenzyme. The autoendoproteolytic cleavage occurs by a canonical serine protease mechanism, in which the side chain hydroxyl group of the serine supplies its oxygen atom to form the C-terminus of the beta chain, while the remainder of the serine residue undergoes an oxidative deamination to produce ammonia and the pyruvoyl prosthetic group on the alpha chain. During this reaction, the Ser that is part of the protease active site of the proenzyme becomes the pyruvoyl prosthetic group, which constitutes an essential element of the active site of the mature decarboxylase.

Its subcellular location is the cell membrane. The catalysed reaction is a 1,2-diacyl-sn-glycero-3-phospho-L-serine + H(+) = a 1,2-diacyl-sn-glycero-3-phosphoethanolamine + CO2. The protein operates within phospholipid metabolism; phosphatidylethanolamine biosynthesis; phosphatidylethanolamine from CDP-diacylglycerol: step 2/2. Its function is as follows. Catalyzes the formation of phosphatidylethanolamine (PtdEtn) from phosphatidylserine (PtdSer). This Shewanella sp. (strain ANA-3) protein is Phosphatidylserine decarboxylase proenzyme.